The primary structure comprises 402 residues: Mediator of RNA polymerase II transcription subunit 27 (402 aa).

Residues 1–23 (MQTLHQSQLLQNPAEAANNQSES) show a composition bias toward polar residues. The tract at residues 1–30 (MQTLHQSQLLQNPAEAANNQSESDAPPKQV) is disordered. A coiled-coil region spans residues 28–49 (KQVAQAMERLNQAARVIADIRL).

The protein belongs to the Mediator complex subunit 27 family. In terms of assembly, component of the Mediator complex.

Its subcellular location is the nucleus. In terms of biological role, component of the Mediator complex, a coactivator involved in the regulated transcription of nearly all RNA polymerase II-dependent genes. Mediator functions as a bridge to convey information from gene-specific regulatory proteins to the basal RNA polymerase II transcription machinery. The Mediator complex, having a compact conformation in its free form, is recruited to promoters by direct interactions with regulatory proteins and serves for the assembly of a functional preinitiation complex with RNA polymerase II and the general transcription factors. The polypeptide is Mediator of RNA polymerase II transcription subunit 27 (MED27) (Arabidopsis thaliana (Mouse-ear cress)).